A 404-amino-acid chain; its full sequence is Serine/threonine transporter SstT (404 aa).

9 helical membrane passes run 17–37 (IGIG…VTAI), 44–64 (FVGA…VQAI), 75–95 (MTLI…VAVI), 138–158 (ALAT…GLAL), 179–199 (IVVW…FSTV), 212–232 (LLIL…NPLL), 287–307 (IPLG…VLTL), 319–339 (FLTA…ASGV), and 354–374 (FGIS…VGVI).

This sequence belongs to the dicarboxylate/amino acid:cation symporter (DAACS) (TC 2.A.23) family.

The protein localises to the cell membrane. The catalysed reaction is L-serine(in) + Na(+)(in) = L-serine(out) + Na(+)(out). It carries out the reaction L-threonine(in) + Na(+)(in) = L-threonine(out) + Na(+)(out). Involved in the import of serine and threonine into the cell, with the concomitant import of sodium (symport system). The sequence is that of Serine/threonine transporter SstT from Streptococcus equi subsp. zooepidemicus (strain H70).